Consider the following 125-residue polypeptide: uncharacterized protein (125 aa).

This is an uncharacterized protein from Caenorhabditis elegans.